Consider the following 774-residue polypeptide: 1,4-alpha-glucan branching enzyme GlgB 1 (774 aa).

The disordered stretch occupies residues 1 to 66; that stretch reads MTPRPSSSGP…AEVAVSPAPD (66 aa). A compositionally biased stretch (basic residues) spans 29 to 40; the sequence is KPAKAAKKKAPR. Over residues 41 to 55 the composition is skewed to low complexity; it reads RTTASANASATTSVS. Asp-457 serves as the catalytic Nucleophile. The active-site Proton donor is the Glu-510. Positions 748 to 774 are disordered; it reads YGGGDVVNPDPVKPEPQGGTAARRASG.

It belongs to the glycosyl hydrolase 13 family. GlgB subfamily. As to quaternary structure, monomer.

The catalysed reaction is Transfers a segment of a (1-&gt;4)-alpha-D-glucan chain to a primary hydroxy group in a similar glucan chain.. Its pathway is glycan biosynthesis; glycogen biosynthesis. Catalyzes the formation of the alpha-1,6-glucosidic linkages in glycogen by scission of a 1,4-alpha-linked oligosaccharide from growing alpha-1,4-glucan chains and the subsequent attachment of the oligosaccharide to the alpha-1,6 position. This is 1,4-alpha-glucan branching enzyme GlgB 1 (glgB1) from Streptomyces coelicolor (strain ATCC BAA-471 / A3(2) / M145).